A 269-amino-acid chain; its full sequence is Mitochondrial acidic protein mam33 (269 aa).

Belongs to the MAM33 family.

It is found in the cytoplasm. The protein localises to the mitochondrion matrix. The polypeptide is Mitochondrial acidic protein mam33 (Schizosaccharomyces pombe (strain 972 / ATCC 24843) (Fission yeast)).